The primary structure comprises 151 residues: FUN14 domain-containing protein 1 (151 aa).

Residues Tyr14–Leu17 carry the YXXL motif. 3 consecutive transmembrane segments (helical) span residues Tyr44 to Phe64, Ala71 to Ile91, and Phe130 to Ala150.

The protein belongs to the FUN14 family.

It localises to the mitochondrion outer membrane. In terms of biological role, acts as an activator of hypoxia-induced mitophagy, an important mechanism for mitochondrial quality control. In Xenopus tropicalis (Western clawed frog), this protein is FUN14 domain-containing protein 1 (fundc1).